The primary structure comprises 497 residues: tRNA-2-methylthio-N(6)-dimethylallyladenosine synthase (497 aa).

A disordered region spans residues 1 to 48 (MTGTSNIPTHGKEHKDAPALLPLPAPNTHHTHAAHPGDPSHDRHPSRG). The segment covering 18-28 (PALLPLPAPNT) has biased composition (low complexity). Positions 48-165 (GKLFIKTHGC…LPDMIRARRE (118 aa)) constitute an MTTase N-terminal domain. The [4Fe-4S] cluster site is built by C57, C94, C128, C202, C206, and C209. In terms of domain architecture, Radical SAM core spans 188 to 430 (RAEGPSAFVS…QKHINAYAAD (243 aa)). Positions 433 to 496 (KRMIGTVQTV…TNSLRGRVHT (64 aa)) constitute a TRAM domain.

It belongs to the methylthiotransferase family. MiaB subfamily. Monomer. Requires [4Fe-4S] cluster as cofactor.

Its subcellular location is the cytoplasm. The catalysed reaction is N(6)-dimethylallyladenosine(37) in tRNA + (sulfur carrier)-SH + AH2 + 2 S-adenosyl-L-methionine = 2-methylsulfanyl-N(6)-dimethylallyladenosine(37) in tRNA + (sulfur carrier)-H + 5'-deoxyadenosine + L-methionine + A + S-adenosyl-L-homocysteine + 2 H(+). Its function is as follows. Catalyzes the methylthiolation of N6-(dimethylallyl)adenosine (i(6)A), leading to the formation of 2-methylthio-N6-(dimethylallyl)adenosine (ms(2)i(6)A) at position 37 in tRNAs that read codons beginning with uridine. The sequence is that of tRNA-2-methylthio-N(6)-dimethylallyladenosine synthase from Xylella fastidiosa (strain M23).